A 499-amino-acid chain; its full sequence is Glutamate--tRNA ligase (499 aa).

Residues 12-22 (PSPTGHLHIGN) carry the 'HIGH' region motif. Residues 259–263 (KLSKR) carry the 'KMSKS' region motif. ATP is bound at residue Lys262.

This sequence belongs to the class-I aminoacyl-tRNA synthetase family. Glutamate--tRNA ligase type 1 subfamily. As to quaternary structure, monomer.

Its subcellular location is the cytoplasm. It catalyses the reaction tRNA(Glu) + L-glutamate + ATP = L-glutamyl-tRNA(Glu) + AMP + diphosphate. In terms of biological role, catalyzes the attachment of glutamate to tRNA(Glu) in a two-step reaction: glutamate is first activated by ATP to form Glu-AMP and then transferred to the acceptor end of tRNA(Glu). The chain is Glutamate--tRNA ligase from Lactobacillus gasseri (strain ATCC 33323 / DSM 20243 / BCRC 14619 / CIP 102991 / JCM 1131 / KCTC 3163 / NCIMB 11718 / NCTC 13722 / AM63).